A 1157-amino-acid chain; its full sequence is Peroxisomal ATPase PEX1 (1157 aa).

2 disordered regions span residues 187 to 221 (SISS…NNGE) and 1135 to 1157 (SGRD…STLM). Over residues 205-217 (SSTSTATGRRSVT) the composition is skewed to low complexity.

This sequence belongs to the AAA ATPase family. As to quaternary structure, interacts with PEX6; forming the PEX1-PEX6 AAA ATPase complex, which is composed of a heterohexamer formed by a trimer of PEX1-PEX6 dimers.

It localises to the membrane. The catalysed reaction is ATP + H2O = ADP + phosphate + H(+). In terms of biological role, component of the PEX1-PEX6 AAA ATPase complex involved in peroxisome biosynthesis. The complex acts as a protein dislocase complex that mediates the ATP-dependent extraction of the PEX5 receptor from peroxisomal membranes, an essential step for PEX5 recycling. Specifically recognizes PEX5 monoubiquitinated at 'Cys-6', and pulls it out of the peroxisome lumen through the PEX2-PEX10-PEX12 retrotranslocation channel. Extraction by the PEX1-PEX6 AAA ATPase complex is accompanied by unfolding of the TPR repeats and release of bound cargo from PEX5. This is Peroxisomal ATPase PEX1 from Komagataella pastoris (Yeast).